We begin with the raw amino-acid sequence, 444 residues long: Sprouty-related, EVH1 domain-containing protein 1 (444 aa).

Ser2 is subject to N-acetylserine. A WH1 domain is found at 6 to 123 (ATSDNDNSYA…RGIRRAIEDI (118 aa)). Residues 123–151 (ISQGCPESKNEAEGADDLQANEEDSSSSL) form a disordered region. The span at 135 to 147 (EGADDLQANEEDS) shows a compositional bias: acidic residues. Position 224 is an N6-methyllysine (Lys224). The 53-residue stretch at 233 to 285 (SIRHVSFQDEDEIVRINPRDILIRRYADYRHPDMWKNDLERDDADSSIQFSKP) folds into the KBD domain. Residues Ser238 and Ser308 each carry the phosphoserine modification. Positions 333 to 444 (SRCVYCQERF…CCGGKHKAAG (112 aa)) are required for interaction with TESK1. The SPR domain maps to 334-442 (RCVYCQERFN…CGCCGGKHKA (109 aa)).

In terms of assembly, homodimer and heterodimer. Able to interact with SPRED2 to form heterodimers. Interacts (via C-terminus) with TAOK1/MARKK (via C-terminus); the interaction does not affect TAOK1 kinase activity. Interacts (via C-terminus) with TESK1 (via C-terminus); the interaction inhibits TESK1 kinase activity. Interacts with CAV1. Interacts with RAS. Interacts with palmitoyltransferase ZDHHC17/HIP14; the interaction leads to palmitoylation of SPRED1. Post-translationally, palmitoylated by ZDHHC17/HIP14. Phosphorylated on tyrosine. In terms of processing, ubiquitinated. In terms of tissue distribution, weakly expressed in embryonic cell line HEK293.

Its subcellular location is the cell membrane. The protein localises to the membrane. The protein resides in the caveola. It is found in the nucleus. Tyrosine kinase substrate that inhibits growth-factor-mediated activation of MAP kinase. Negatively regulates hematopoiesis of bone marrow. Inhibits fibroblast growth factor (FGF)-induced retinal lens fiber differentiation, probably by inhibiting FGF-mediated phosphorylation of ERK1/2. Attenuates actin stress fiber formation via inhibition of TESK1-mediated phosphorylation of cofilin. Inhibits TGFB-induced epithelial-to-mesenchymal transition in lens epithelial cells. This Homo sapiens (Human) protein is Sprouty-related, EVH1 domain-containing protein 1 (SPRED1).